The following is a 191-amino-acid chain: Small ribosomal subunit protein uS4A (191 aa).

S50 and S161 each carry phosphoserine. Residues 107–181 form the S4 RNA-binding domain; it reads RRLQTQVFKL…CKRKRLRSQE (75 aa). At Y164 the chain carries Phosphotyrosine. Positions 166–191 are disordered; that stretch reads GGRPGRCKRKRLRSQEGGEGEEAEEE. At S179 the chain carries Phosphoserine.

The protein belongs to the universal ribosomal protein uS4 family. Component of the small ribosomal subunit (SSU). Mature yeast ribosomes consist of a small (40S) and a large (60S) subunit. The 40S small subunit contains 1 molecule of ribosomal RNA (18S rRNA) and at least 33 different proteins. The large 60S subunit contains 3 rRNA molecules (25S, 5.8S and 5S rRNA) and at least 46 different proteins. Interacts with snoRNA U3. uS11 interacts with MPP10. Component of the ribosomal small subunit (SSU) processome composed of at least 40 protein subunits and snoRNA U3.

The protein localises to the cytoplasm. Component of the ribosome, a large ribonucleoprotein complex responsible for the synthesis of proteins in the cell. The small ribosomal subunit (SSU) binds messenger RNAs (mRNAs) and translates the encoded message by selecting cognate aminoacyl-transfer RNA (tRNA) molecules. The large subunit (LSU) contains the ribosomal catalytic site termed the peptidyl transferase center (PTC), which catalyzes the formation of peptide bonds, thereby polymerizing the amino acids delivered by tRNAs into a polypeptide chain. The nascent polypeptides leave the ribosome through a tunnel in the LSU and interact with protein factors that function in enzymatic processing, targeting, and the membrane insertion of nascent chains at the exit of the ribosomal tunnel. uS4 is involved in nucleolar processing of pre-18S ribosomal RNA and ribosome assembly. This Schizosaccharomyces pombe (strain 972 / ATCC 24843) (Fission yeast) protein is Small ribosomal subunit protein uS4A (rps901).